The following is a 68-amino-acid chain: Inhibitor of trypsin and hageman factor (68 aa).

Ser-1 is subject to N-acetylserine. An intrachain disulfide couples Cys-3 to Cys-48.

This sequence belongs to the protease inhibitor I13 (potato type I serine protease inhibitor) family.

Specifically inhibits both trypsin and activated Hageman factor. The polypeptide is Inhibitor of trypsin and hageman factor (Cucurbita maxima (Pumpkin)).